Consider the following 213-residue polypeptide: 3,4-dihydroxy-2-butanone 4-phosphate synthase (213 aa).

Residues 37–38, Asp-42, 150–154, and Glu-174 contribute to the D-ribulose 5-phosphate site; these read RE and RPGHT. Glu-38 provides a ligand contact to Mg(2+). His-153 serves as a coordination point for Mg(2+).

This sequence belongs to the DHBP synthase family. Homodimer. Mg(2+) serves as cofactor. The cofactor is Mn(2+).

The enzyme catalyses D-ribulose 5-phosphate = (2S)-2-hydroxy-3-oxobutyl phosphate + formate + H(+). It functions in the pathway cofactor biosynthesis; riboflavin biosynthesis; 2-hydroxy-3-oxobutyl phosphate from D-ribulose 5-phosphate: step 1/1. Its function is as follows. Catalyzes the conversion of D-ribulose 5-phosphate to formate and 3,4-dihydroxy-2-butanone 4-phosphate. The polypeptide is 3,4-dihydroxy-2-butanone 4-phosphate synthase (Clostridium botulinum (strain ATCC 19397 / Type A)).